A 450-amino-acid chain; its full sequence is Cyclic GMP-AMP phosphodiesterase SMPDL3A (450 aa).

The first 22 residues, 1 to 22 (MARLGALVCCLLAAWHCRPGLG), serve as a signal peptide directing secretion. Zn(2+) is bound by residues aspartate 42 and histidine 44. An intrachain disulfide couples cysteine 59 to cysteine 78. Position 107 (aspartate 107) interacts with Zn(2+). Residue histidine 111 coordinates ATP. Residues asparagine 124 and asparagine 128 are each glycosylated (N-linked (GlcNAc...) asparagine). Asparagine 148 provides a ligand contact to Zn(2+). ATP-binding residues include asparagine 148 and histidine 149. 2 N-linked (GlcNAc...) asparagine glycosylation sites follow: asparagine 219 and asparagine 235. 3 residues coordinate Zn(2+): histidine 249, histidine 290, and histidine 292. Residues asparagine 353 and asparagine 370 are each glycosylated (N-linked (GlcNAc...) asparagine). 2 cysteine pairs are disulfide-bonded: cysteine 417–cysteine 421 and cysteine 427–cysteine 440.

It belongs to the acid sphingomyelinase family. As to quaternary structure, monomer. Homodimer; homodimerizes following 2',3'-cGAMP-binding. It depends on Zn(2+) as a cofactor.

Its subcellular location is the secreted. The catalysed reaction is 2',3'-cGAMP + H2O = 5'-pGpA(2'-5') + H(+). It carries out the reaction 5'-pGpA(2'-5') + H2O = 5'-GpA(2'-5') + phosphate. The enzyme catalyses a ribonucleoside 5'-triphosphate + H2O = a ribonucleoside 5'-diphosphate + phosphate + H(+). It catalyses the reaction ATP + H2O = ADP + phosphate + H(+). Its function is as follows. Cyclic-nucleotide phosphodiesterase that acts as a negative regulator of innate immunity by mediating degradation of 2',3'-cGAMP, thereby inhibiting the cGAS-STING signaling. Specifically linearizes 2',3'-cGAMP into 2'5'-bond pGpA and further hydrolyzes pGpA to produce GpA. Also has in vitro nucleotide phosphodiesterase activity with nucleoside triphosphates, such as ATP. Has in vitro activity with p-nitrophenyl-TMP. Has lower activity with nucleoside diphosphates, and no activity with nucleoside monophosphates. Has in vitro activity with CDP-choline, giving rise to CMP and phosphocholine. Has in vitro activity with CDP-ethanolamine. Does not have sphingomyelin phosphodiesterase activity. The chain is Cyclic GMP-AMP phosphodiesterase SMPDL3A (SMPDL3A) from Bos taurus (Bovine).